A 246-amino-acid polypeptide reads, in one-letter code: ATP synthase subunit a (246 aa).

A propeptide spans 1–3 (MFY) (removed in mature form). 7 helical membrane-spanning segments follow: residues 21–41 (LTFS…IIIF), 56–76 (WGVS…GQIG), 82–102 (YFPL…ISMI), 113–133 (VAVV…GLYL), 138–158 (FFAL…LVLI), 184–204 (LMLI…LGFV), and 206–226 (GIIP…IAII).

It belongs to the ATPase A chain family. F-type ATPases have 2 components, CF(1) - the catalytic core - and CF(0) - the membrane proton channel. CF(1) has five subunits: alpha(3), beta(3), gamma(1), delta(1), epsilon(1). CF(0) has three main subunits: a, b and c.

It is found in the mitochondrion inner membrane. Mitochondrial membrane ATP synthase (F(1)F(0) ATP synthase or Complex V) produces ATP from ADP in the presence of a proton gradient across the membrane which is generated by electron transport complexes of the respiratory chain. F-type ATPases consist of two structural domains, F(1) - containing the extramembraneous catalytic core and F(0) - containing the membrane proton channel, linked together by a central stalk and a peripheral stalk. During catalysis, ATP synthesis in the catalytic domain of F(1) is coupled via a rotary mechanism of the central stalk subunits to proton translocation. Key component of the proton channel; it may play a direct role in the translocation of protons across the membrane. The polypeptide is ATP synthase subunit a (ATP6) (Candida parapsilosis (Yeast)).